The following is a 161-amino-acid chain: Troponin C, slow skeletal and cardiac muscles (161 aa).

M1 carries the N-acetylmethionine modification. EF-hand domains are found at residues 16–51 (QKNE…LGQN), 52–87 (PTPE…CMKD), 92–127 (KSEE…TGET), and 128–161 (ITED…KGVE). Positions 65, 67, 69, 71, and 76 each coordinate Ca(2+). Residue S98 is modified to Phosphoserine. Ca(2+) is bound by residues D105, N107, D109, Y111, E116, D141, N143, D145, R147, and E152.

This sequence belongs to the troponin C family.

Its function is as follows. Troponin is the central regulatory protein of striated muscle contraction. Tn consists of three components: Tn-I which is the inhibitor of actomyosin ATPase, Tn-T which contains the binding site for tropomyosin and Tn-C. The binding of calcium to Tn-C abolishes the inhibitory action of Tn on actin filaments. In Bos taurus (Bovine), this protein is Troponin C, slow skeletal and cardiac muscles (TNNC1).